Reading from the N-terminus, the 151-residue chain is Large ribosomal subunit protein uL13 (151 aa).

Belongs to the universal ribosomal protein uL13 family. In terms of assembly, part of the 50S ribosomal subunit.

In terms of biological role, this protein is one of the early assembly proteins of the 50S ribosomal subunit, although it is not seen to bind rRNA by itself. It is important during the early stages of 50S assembly. The polypeptide is Large ribosomal subunit protein uL13 (Synechocystis sp. (strain ATCC 27184 / PCC 6803 / Kazusa)).